The sequence spans 129 residues: Histone H2A type 2-C (129 aa).

The tract at residues 1-22 (MSGRGKQGGKARAKAKSRSSRA) is disordered. S2 is modified (N-acetylserine). Residue S2 is modified to Phosphoserine; by RPS6KA5. Position 4 is a citrulline; alternate (R4). R4 carries the post-translational modification Symmetric dimethylarginine; by PRMT5; alternate. 2 positions are modified to N6-(2-hydroxyisobutyryl)lysine; alternate: K6 and K10. Position 6 is an N6-acetyllysine; alternate (K6). Basic residues predominate over residues 7-19 (QGGKARAKAKSRS). K10 carries the N6-lactoyllysine; alternate modification. K10 carries the post-translational modification N6-succinyllysine; alternate. Glycyl lysine isopeptide (Lys-Gly) (interchain with G-Cter in ubiquitin) cross-links involve residues K14 and K16. K37 bears the N6-(2-hydroxyisobutyryl)lysine; alternate mark. K37 is modified (N6-(beta-hydroxybutyryl)lysine; alternate). K37 carries the post-translational modification N6-crotonyllysine; alternate. Residues K75 and K76 each carry the N6-(2-hydroxyisobutyryl)lysine modification. Position 96 is an N6-(2-hydroxyisobutyryl)lysine; alternate (K96). K96 carries the N6-succinyllysine; alternate modification. Position 96 is an N6-glutaryllysine; alternate (K96). K100 is subject to N6-glutaryllysine. An N5-methylglutamine modification is found at Q105. K119 is modified (N6-(2-hydroxyisobutyryl)lysine; alternate). 2 positions are modified to N6-crotonyllysine; alternate: K119 and K120. An N6-glutaryllysine; alternate mark is found at K119 and K120. K120 participates in a covalent cross-link: Glycyl lysine isopeptide (Lys-Gly) (interchain with G-Cter in ubiquitin); alternate. T121 carries the post-translational modification Phosphothreonine; by DCAF1. S123 carries the post-translational modification Phosphoserine. K125 is subject to N6-crotonyllysine.

It belongs to the histone H2A family. As to quaternary structure, the nucleosome is a histone octamer containing two molecules each of H2A, H2B, H3 and H4 assembled in one H3-H4 heterotetramer and two H2A-H2B heterodimers. The octamer wraps approximately 147 bp of DNA. Post-translationally, deiminated on Arg-4 in granulocytes upon calcium entry. Monoubiquitination of Lys-120 (H2AK119Ub) by RING1, TRIM37 and RNF2/RING2 complex gives a specific tag for epigenetic transcriptional repression and participates in X chromosome inactivation of female mammals. It is involved in the initiation of both imprinted and random X inactivation. Ubiquitinated H2A is enriched in inactive X chromosome chromatin. Ubiquitination of H2A functions downstream of methylation of 'Lys-27' of histone H3 (H3K27me). H2AK119Ub by RNF2/RING2 can also be induced by ultraviolet and may be involved in DNA repair. Following DNA double-strand breaks (DSBs), it is ubiquitinated through 'Lys-63' linkage of ubiquitin moieties by the E2 ligase UBE2N and the E3 ligases RNF8 and RNF168, leading to the recruitment of repair proteins to sites of DNA damage. Ubiquitination at Lys-14 and Lys-16 (H2AK13Ub and H2AK15Ub, respectively) in response to DNA damage is initiated by RNF168 that mediates monoubiquitination at these 2 sites, and 'Lys-63'-linked ubiquitin are then conjugated to monoubiquitin; RNF8 is able to extend 'Lys-63'-linked ubiquitin chains in vitro. H2AK119Ub and ionizing radiation-induced 'Lys-63'-linked ubiquitination (H2AK13Ub and H2AK15Ub) are distinct events. In terms of processing, phosphorylation on Ser-2 (H2AS1ph) is enhanced during mitosis. Phosphorylation on Ser-2 by RPS6KA5/MSK1 directly represses transcription. Acetylation of H3 inhibits Ser-2 phosphorylation by RPS6KA5/MSK1. Phosphorylation at Thr-121 (H2AT120ph) by DCAF1 is present in the regulatory region of many tumor suppresor genes and down-regulates their transcription. Post-translationally, symmetric dimethylation on Arg-4 by the PRDM1/PRMT5 complex may play a crucial role in the germ-cell lineage. Glutamine methylation at Gln-105 (H2AQ104me) by FBL is specifically dedicated to polymerase I. It is present at 35S ribosomal DNA locus and impairs binding of the FACT complex. In terms of processing, crotonylation (Kcr) is specifically present in male germ cells and marks testis-specific genes in post-meiotic cells, including X-linked genes that escape sex chromosome inactivation in haploid cells. Crotonylation marks active promoters and enhancers and confers resistance to transcriptional repressors. It is also associated with post-meiotically activated genes on autosomes. Post-translationally, lactylated in macrophages by EP300/P300 by using lactoyl-CoA directly derived from endogenous or exogenous lactate, leading to stimulates gene transcription.

It localises to the nucleus. It is found in the chromosome. Core component of nucleosome. Nucleosomes wrap and compact DNA into chromatin, limiting DNA accessibility to the cellular machineries which require DNA as a template. Histones thereby play a central role in transcription regulation, DNA repair, DNA replication and chromosomal stability. DNA accessibility is regulated via a complex set of post-translational modifications of histones, also called histone code, and nucleosome remodeling. In Bos taurus (Bovine), this protein is Histone H2A type 2-C.